A 726-amino-acid chain; its full sequence is Catalase-peroxidase (726 aa).

A compositionally biased stretch (polar residues) spans 1 to 12 (MSTPSDQHNTLS). The interval 1-34 (MSTPSDQHNTLSAGKCPFHQGNSNQTAGGGTSSR) is disordered. A cross-link (tryptophyl-tyrosyl-methioninium (Trp-Tyr) (with M-252)) is located at residues 105-226 (WHSAGTYRSA…LGATEMGLIY (122 aa)). Residue histidine 106 is the Proton acceptor of the active site. Residues 226 to 252 (YVNPEGPNHSGDPASAAPAIRATFGNM) constitute a cross-link (tryptophyl-tyrosyl-methioninium (Tyr-Met) (with W-105)). Histidine 267 lines the heme b pocket.

The protein belongs to the peroxidase family. Peroxidase/catalase subfamily. Homodimer or homotetramer. Heme b is required as a cofactor. Post-translationally, formation of the three residue Trp-Tyr-Met cross-link is important for the catalase, but not the peroxidase activity of the enzyme.

It carries out the reaction H2O2 + AH2 = A + 2 H2O. The catalysed reaction is 2 H2O2 = O2 + 2 H2O. Functionally, bifunctional enzyme with both catalase and broad-spectrum peroxidase activity. This is Catalase-peroxidase from Cronobacter sakazakii (strain ATCC BAA-894) (Enterobacter sakazakii).